The chain runs to 92 residues: Small ribosomal subunit protein uS19c (92 aa).

Belongs to the universal ribosomal protein uS19 family.

The protein localises to the plastid. It localises to the chloroplast. Functionally, protein S19 forms a complex with S13 that binds strongly to the 16S ribosomal RNA. This chain is Small ribosomal subunit protein uS19c, found in Platanus occidentalis (Sycamore).